Reading from the N-terminus, the 548-residue chain is Membrane protein insertase YidC (548 aa).

A helical transmembrane segment spans residues 6-26; it reads NLLVIALLFVSFMIWQAWEQD. Positions 28 to 54 are disordered; the sequence is NPQPQTQQTTQTTTTAAGSAADQGVPA. The span at 29-42 shows a compositional bias: low complexity; it reads PQPQTQQTTQTTTT. 4 helical membrane-spanning segments follow: residues 350 to 370, 424 to 444, 458 to 478, and 499 to 519; these read FVGN…GIMY, FPLI…MGSI, LSAQ…MFFI, and PVIF…YYIV.

The protein belongs to the OXA1/ALB3/YidC family. Type 1 subfamily. As to quaternary structure, interacts with the Sec translocase complex via SecD. Specifically interacts with transmembrane segments of nascent integral membrane proteins during membrane integration.

It is found in the cell inner membrane. In terms of biological role, required for the insertion and/or proper folding and/or complex formation of integral membrane proteins into the membrane. Involved in integration of membrane proteins that insert both dependently and independently of the Sec translocase complex, as well as at least some lipoproteins. Aids folding of multispanning membrane proteins. The chain is Membrane protein insertase YidC from Salmonella arizonae (strain ATCC BAA-731 / CDC346-86 / RSK2980).